A 261-amino-acid chain; its full sequence is uncharacterized protein (261 aa).

Residue 41-48 (GKSGSGKS) participates in ATP binding.

It belongs to the IIV-6 075L family.

This is an uncharacterized protein from Invertebrate iridescent virus 3 (IIV-3).